The sequence spans 322 residues: CRISPR-associated protein Cas1 1 (322 aa).

Residues Glu149, His214, and Glu229 each contribute to the Mn(2+) site.

It belongs to the CRISPR-associated endonuclease Cas1 family. As to quaternary structure, homodimer, forms a heterotetramer with a Cas2 homodimer. Requires Mg(2+) as cofactor. Mn(2+) serves as cofactor.

Its function is as follows. CRISPR (clustered regularly interspaced short palindromic repeat), is an adaptive immune system that provides protection against mobile genetic elements (viruses, transposable elements and conjugative plasmids). CRISPR clusters contain spacers, sequences complementary to antecedent mobile elements, and target invading nucleic acids. CRISPR clusters are transcribed and processed into CRISPR RNA (crRNA). Acts as a dsDNA endonuclease. Involved in the integration of spacer DNA into the CRISPR cassette. This is CRISPR-associated protein Cas1 1 from Methanobrevibacter ruminantium (strain ATCC 35063 / DSM 1093 / JCM 13430 / OCM 146 / M1) (Methanobacterium ruminantium).